The chain runs to 293 residues: uncharacterized protein (293 aa).

Residues 1 to 22 are disordered; it reads MTFNEGVQIDTSTTSTSGSGGG. A helical transmembrane segment spans residues 25-45; sequence LAIGGGLGGLLVVVVAMLLGV. Residues 243–265 form a disordered region; sequence GDDRIQQQTTGRTNPETWTHGSA. Positions 248 to 265 are enriched in polar residues; sequence QQQTTGRTNPETWTHGSA.

The protein resides in the membrane. This is an uncharacterized protein from Mycobacterium tuberculosis (strain CDC 1551 / Oshkosh).